Consider the following 96-residue polypeptide: Co-chaperonin GroES (96 aa).

It belongs to the GroES chaperonin family. In terms of assembly, heptamer of 7 subunits arranged in a ring. Interacts with the chaperonin GroEL.

The protein resides in the cytoplasm. Together with the chaperonin GroEL, plays an essential role in assisting protein folding. The GroEL-GroES system forms a nano-cage that allows encapsulation of the non-native substrate proteins and provides a physical environment optimized to promote and accelerate protein folding. GroES binds to the apical surface of the GroEL ring, thereby capping the opening of the GroEL channel. The polypeptide is Co-chaperonin GroES (Cupriavidus taiwanensis (strain DSM 17343 / BCRC 17206 / CCUG 44338 / CIP 107171 / LMG 19424 / R1) (Ralstonia taiwanensis (strain LMG 19424))).